Consider the following 230-residue polypeptide: Large ribosomal subunit protein uL1 (230 aa).

This sequence belongs to the universal ribosomal protein uL1 family. In terms of assembly, part of the 50S ribosomal subunit.

In terms of biological role, binds directly to 23S rRNA. The L1 stalk is quite mobile in the ribosome, and is involved in E site tRNA release. Its function is as follows. Protein L1 is also a translational repressor protein, it controls the translation of the L11 operon by binding to its mRNA. This chain is Large ribosomal subunit protein uL1, found in Erythrobacter litoralis (strain HTCC2594).